Reading from the N-terminus, the 293-residue chain is Putative ribose uptake protein RbsU (293 aa).

Transmembrane regions (helical) follow at residues 5–24 (ALLI…TVAS), 34–51 (IIGA…LAVV), 58–80 (TGTN…IITF), 95–114 (TTAF…LGNW), 121–138 (IIGF…RMTV), 153–170 (RAVV…LYSA), 177–199 (IDGL…IYGF), 212–234 (ITWL…LISA), 241–263 (LATG…IYFL), and 273–292 (VITI…TVFI).

This sequence belongs to the GRP transporter (TC 2.A.7.5) family.

It is found in the cell membrane. In terms of biological role, could be involved in the uptake of ribose. The sequence is that of Putative ribose uptake protein RbsU (rbsU) from Staphylococcus aureus (strain COL).